The following is a 484-amino-acid chain: Ankyrin repeat protein T5 (484 aa).

7 ANK repeats span residues 33–64 (MDDTPFSLYLTRYDCTLETLRLFLKRGVDVNG), 68–102 (TRTSPLCTVLSNKELGKEAETLAMCLIDAGADVNA), 106–138 (DGRYPLLCLLENDRINTTSFVKYMIDRGTLVCV), 142–173 (DGCGPIQTYLRSKNVVLETLHVLVRAGASIHD), 178–211 (YGFNILQCYMISHVRSSDVRILRFLAGQGVNSSQ), 251–280 (LDFTPINYCVIHNDRRTFDYLLEKGANPNV), and 284–313 (LGNSCLDLAVLNGNKYMTLRLLRKTITPDA).

The polypeptide is Ankyrin repeat protein T5 (Rabbit fibroma virus (strain Kasza) (RFV)).